The sequence spans 66 residues: Pancreatic polypeptide prohormone (66 aa).

Tyrosine 36 is modified (tyrosine amide). Residues 60–66 (ELSPMDV) constitute a propeptide that is removed on maturation.

Belongs to the NPY family.

Its subcellular location is the secreted. Hormone secreted by pancreatic cells that acts as a regulator of pancreatic and gastrointestinal functions probably by signaling through the G protein-coupled receptor NPY4R2. The chain is Pancreatic polypeptide prohormone (PPY) from Felis catus (Cat).